A 265-amino-acid polypeptide reads, in one-letter code: Mlc titration factor A (265 aa).

Residues histidine 111, histidine 148, histidine 152, and glutamate 211 each contribute to the Zn(2+) site.

It belongs to the MtfA family. As to quaternary structure, interacts with Mlc. It depends on Zn(2+) as a cofactor.

It is found in the cytoplasm. Involved in the modulation of the activity of the glucose-phosphotransferase system (glucose-PTS). Interacts with the transcriptional repressor Mlc, preventing its interaction with DNA and leading to the modulation of expression of genes regulated by Mlc, including ptsG, which encodes the PTS system glucose-specific EIICB component. Functionally, shows zinc-dependent metallopeptidase activity. In Escherichia coli O139:H28 (strain E24377A / ETEC), this protein is Mlc titration factor A.